A 271-amino-acid chain; its full sequence is Aminoglycoside 3'-phosphotransferase (271 aa).

The Proton acceptor role is filled by D198.

The protein belongs to the aminoglycoside phosphotransferase family.

It catalyses the reaction kanamycin A + ATP = kanamycin 3'-phosphate + ADP + H(+). Its function is as follows. Resistance to kanamycin and structurally-related aminoglycosides, including amikacin. This Escherichia coli protein is Aminoglycoside 3'-phosphotransferase (aphA).